The sequence spans 142 residues: Large ribosomal subunit protein uL13 (142 aa).

This sequence belongs to the universal ribosomal protein uL13 family. In terms of assembly, part of the 50S ribosomal subunit.

In terms of biological role, this protein is one of the early assembly proteins of the 50S ribosomal subunit, although it is not seen to bind rRNA by itself. It is important during the early stages of 50S assembly. The polypeptide is Large ribosomal subunit protein uL13 (Wigglesworthia glossinidia brevipalpis).